The sequence spans 255 residues: 1-(5-phosphoribosyl)-5-[(5-phosphoribosylamino)methylideneamino] imidazole-4-carboxamide isomerase (255 aa).

Asp-8 functions as the Proton acceptor in the catalytic mechanism. The active-site Proton donor is Asp-129.

It belongs to the HisA/HisF family.

The protein resides in the cytoplasm. It catalyses the reaction 1-(5-phospho-beta-D-ribosyl)-5-[(5-phospho-beta-D-ribosylamino)methylideneamino]imidazole-4-carboxamide = 5-[(5-phospho-1-deoxy-D-ribulos-1-ylimino)methylamino]-1-(5-phospho-beta-D-ribosyl)imidazole-4-carboxamide. The protein operates within amino-acid biosynthesis; L-histidine biosynthesis; L-histidine from 5-phospho-alpha-D-ribose 1-diphosphate: step 4/9. The chain is 1-(5-phosphoribosyl)-5-[(5-phosphoribosylamino)methylideneamino] imidazole-4-carboxamide isomerase from Prochlorococcus marinus (strain MIT 9211).